Here is a 404-residue protein sequence, read N- to C-terminus: Glycosylated lysosomal membrane protein (404 aa).

The signal sequence occupies residues 1-35 (MRGSVERGWGWGHCASSPLLLWTLLLFAAPFGLLG). The Lumenal segment spans residues 36-371 (EKTRQLSLEV…GRLVPTSPGH (336 aa)). 5 N-linked (GlcNAc...) asparagine glycosylation sites follow: N65, N134, N159, N186, and N229. The chain crosses the membrane as a helical span at residues 372 to 392 (HGSALGAPGLMLLGGGLVLLL). At 393 to 404 (HHRKYSEYQSIN) the chain is on the cytoplasmic side. The Lysosomal targeting motif motif lies at 400–404 (YQSIN).

The protein belongs to the GLMP family. Interacts (via lumenal domain) with lysosomal protein MFSD1; the interaction starts while both proteins are still in the endoplasmic reticulum and is required for stabilization of MFSD1 in lysosomes but has no direct effect on its targeting to lysosomes or transporter activity. Highly N-glycosylated. N-glycosylation is essential for GLMP stability and for MFSD1 lysosomal localization.

The protein localises to the lysosome membrane. In terms of biological role, required to protect lysosomal transporter MFSD1 from lysosomal proteolysis and for MFSD1 lysosomal localization. The sequence is that of Glycosylated lysosomal membrane protein from Pongo abelii (Sumatran orangutan).